Consider the following 295-residue polypeptide: uncharacterized protein (295 aa).

The span at 1-13 (MRHSVARPTRLPR) shows a compositional bias: basic residues. Disordered stretches follow at residues 1 to 111 (MRHS…AGLS) and 183 to 295 (TSAF…PRDS). A compositionally biased stretch (low complexity) spans 57-67 (AGPSAGAAARP). The segment covering 68-77 (AAPPPQPREP) has biased composition (pro residues). Basic and acidic residues-rich tracts occupy residues 245–257 (LRPK…DRRP) and 280–295 (GEPH…PRDS).

This is an uncharacterized protein from Homo sapiens (Human).